A 359-amino-acid polypeptide reads, in one-letter code: 4-hydroxy-3-methylbut-2-en-1-yl diphosphate synthase (flavodoxin) (359 aa).

Residues Cys264, Cys267, Cys299, and Glu306 each coordinate [4Fe-4S] cluster.

It belongs to the IspG family. [4Fe-4S] cluster is required as a cofactor.

It carries out the reaction (2E)-4-hydroxy-3-methylbut-2-enyl diphosphate + oxidized [flavodoxin] + H2O + 2 H(+) = 2-C-methyl-D-erythritol 2,4-cyclic diphosphate + reduced [flavodoxin]. Its pathway is isoprenoid biosynthesis; isopentenyl diphosphate biosynthesis via DXP pathway; isopentenyl diphosphate from 1-deoxy-D-xylulose 5-phosphate: step 5/6. In terms of biological role, converts 2C-methyl-D-erythritol 2,4-cyclodiphosphate (ME-2,4cPP) into 1-hydroxy-2-methyl-2-(E)-butenyl 4-diphosphate. The sequence is that of 4-hydroxy-3-methylbut-2-en-1-yl diphosphate synthase (flavodoxin) from Helicobacter pylori (strain J99 / ATCC 700824) (Campylobacter pylori J99).